The following is a 406-amino-acid chain: MLYYRNLALLSLLSLSSAAPSQVERSPDAVFKPRAVCTPTAGGSSSIDDVPAIRKAISSCGNGGTIVFPAGSTYYLNSVLDLAGCSNCDIQVEGLLMFSGSTEYWGGKTAMININKINALKLRSLTGSGVIDGNGQNAYDLFASNSDYERPTLLYITGGSNIEVSGLRQRNPPNVFNSVKGDAKDVTFTNLRMDATSRSDNPPKNTDGFDIGSSTHVTISSVSVSNDDDCVALKPGCNYVTVENVTCTGSHGISVGSLGKSSADTVQNVYAHRITMIDSTKAAGIKTYPSGNGHGLSTVKNVTFSDFNVRGCDYAFQIQSCYGESASYCASHPGNAILQDIIVKGFSGTTSGKDDWVVADLNCGARGTCDVSMSDFSVKAPSGKATVLCANTPSSLGVTCTSGASG.

An N-terminal signal peptide occupies residues 1–18; it reads MLYYRNLALLSLLSLSSA. PbH1 repeat units lie at residues 183 to 213, 214 to 235, 237 to 257, and 299 to 320; these read AKDV…DIGS, STHV…ALKP, CNYV…SVGS, and VKNV…QIQS. Residue Asp228 is the Proton donor of the active site. A glycan (N-linked (GlcNAc...) asparagine) is linked at Asn244. Residue His251 is part of the active site. The N-linked (GlcNAc...) asparagine glycan is linked to Asn301.

It belongs to the glycosyl hydrolase 28 family.

It localises to the secreted. Its function is as follows. Pectinolytic enzyme involved in the degradation of xylogalacturonan (xga), a galacturonan backbone heavily substituted with xylose, and which is one important component of the hairy regions of pectin. Activity requires a galacturonic acid backbone substituted with xylose. The chain is Probable endo-xylogalacturonan hydrolase A (xghA) from Neosartorya fischeri (strain ATCC 1020 / DSM 3700 / CBS 544.65 / FGSC A1164 / JCM 1740 / NRRL 181 / WB 181) (Aspergillus fischerianus).